Here is a 557-residue protein sequence, read N- to C-terminus: DNA mismatch repair protein MutL (557 aa).

The protein belongs to the DNA mismatch repair MutL/HexB family.

Its function is as follows. This protein is involved in the repair of mismatches in DNA. It is required for dam-dependent methyl-directed DNA mismatch repair. May act as a 'molecular matchmaker', a protein that promotes the formation of a stable complex between two or more DNA-binding proteins in an ATP-dependent manner without itself being part of a final effector complex. This chain is DNA mismatch repair protein MutL, found in Methanothrix thermoacetophila (strain DSM 6194 / JCM 14653 / NBRC 101360 / PT) (Methanosaeta thermophila).